We begin with the raw amino-acid sequence, 469 residues long: tRNA (cytosine(72)-C(5))-methyltransferase NSUN6 (469 aa).

One can recognise a PUA domain in the interval 111–203; sequence QCEAIVGAQC…MGIRMTEPVY (93 aa). Residues 242–248, D266, D293, and D323 contribute to the S-adenosyl-L-methionine site; that span reads CAAPGGK. The active-site Nucleophile is C373. The residue at position 419 (K419) is an N6-acetyllysine.

The protein belongs to the class I-like SAM-binding methyltransferase superfamily. RsmB/NOP family.

It localises to the cytoplasm. It carries out the reaction cytidine(72) in tRNA(Thr) + S-adenosyl-L-methionine = 5-methylcytidine(72) in tRNA(Thr) + S-adenosyl-L-homocysteine + H(+). It catalyses the reaction cytidine(72) in tRNA(Cys) + S-adenosyl-L-methionine = 5-methylcytidine(72) in tRNA(Cys) + S-adenosyl-L-homocysteine + H(+). In terms of biological role, S-adenosyl-L-methionine-dependent methyltransferase that specifically methylates the C5 position of cytosine 72 in tRNA(Thr)(TGT) and tRNA(Cys)(GCA). In vitro also methylates tRNA(Thr)(AGT). Methylation requires, in the acceptor stem region, the presence of the 3'-CCA terminus, the target site C72, the discriminator base U73, and the second and third base pairs (2:71 and 3:70) in the tRNA substrates. The protein is tRNA (cytosine(72)-C(5))-methyltransferase NSUN6 of Homo sapiens (Human).